A 255-amino-acid chain; its full sequence is Type III pantothenate kinase (255 aa).

6–13 (DIGNSNIV) serves as a coordination point for ATP. Substrate is bound by residues tyrosine 100 and 107–110 (GSDR). Aspartate 109 acts as the Proton acceptor in catalysis. K(+) is bound at residue aspartate 129. Residue threonine 132 coordinates ATP. A substrate-binding site is contributed by threonine 184.

The protein belongs to the type III pantothenate kinase family. As to quaternary structure, homodimer. NH4(+) serves as cofactor. K(+) is required as a cofactor.

It localises to the cytoplasm. The enzyme catalyses (R)-pantothenate + ATP = (R)-4'-phosphopantothenate + ADP + H(+). The protein operates within cofactor biosynthesis; coenzyme A biosynthesis; CoA from (R)-pantothenate: step 1/5. Functionally, catalyzes the phosphorylation of pantothenate (Pan), the first step in CoA biosynthesis. This is Type III pantothenate kinase from Brevibacillus brevis (strain 47 / JCM 6285 / NBRC 100599).